Consider the following 309-residue polypeptide: Homoserine O-succinyltransferase (309 aa).

Cys142 acts as the Acyl-thioester intermediate in catalysis. Substrate contacts are provided by Lys163 and Ser192. His235 (proton acceptor) is an active-site residue. Glu237 is a catalytic residue. Residue Arg249 participates in substrate binding.

This sequence belongs to the MetA family. In terms of assembly, homodimer.

It localises to the cytoplasm. It carries out the reaction L-homoserine + succinyl-CoA = O-succinyl-L-homoserine + CoA. Its pathway is amino-acid biosynthesis; L-methionine biosynthesis via de novo pathway; O-succinyl-L-homoserine from L-homoserine: step 1/1. In terms of biological role, transfers a succinyl group from succinyl-CoA to L-homoserine, forming succinyl-L-homoserine. This is Homoserine O-succinyltransferase from Escherichia coli (strain SE11).